The following is a 176-amino-acid chain: Japanin (176 aa).

The N-terminal stretch at 1 to 24 (MKVLRCLVCSFYIIVSLITTMTIG) is a signal peptide. Glu47 lines the cholesterol pocket. 2 disulfide bridges follow: Cys52–Cys174 and Cys138–Cys162. N-linked (GlcNAc...) asparagine glycosylation is found at Asn59 and Asn155.

It belongs to the calycin superfamily. Lipocalin family. As to quaternary structure, homodimer; non-disulfide-linked. Each monomer accommodates one molecule of cholesterol in a pocket. As to expression, expressed in salivary glands.

It is found in the secreted. Its function is as follows. Salivary tick protein that modulates host immune response. This protein blocks dendritic cell (DC) differentiation from monocytes. In addition, it inhibits up-regulation of costimulatory molecules and pro-inflammatory cytokines in response to stimuli and promotes up-regulation of co-inhibitory molecules and the anti-inflammatory cytokine interleukin-10. It has a pocket to accomodate cholesterol, which may have immune-modulatory roles, either directly or through interactions with the host gut microbiota. The chain is Japanin from Rhipicephalus appendiculatus (Brown ear tick).